A 313-amino-acid polypeptide reads, in one-letter code: Ribosomal RNA small subunit methyltransferase H (313 aa).

S-adenosyl-L-methionine-binding positions include 35–37 (GGY), Asp53, Phe80, Asp101, and Gln108.

The protein belongs to the methyltransferase superfamily. RsmH family.

The protein localises to the cytoplasm. The catalysed reaction is cytidine(1402) in 16S rRNA + S-adenosyl-L-methionine = N(4)-methylcytidine(1402) in 16S rRNA + S-adenosyl-L-homocysteine + H(+). Functionally, specifically methylates the N4 position of cytidine in position 1402 (C1402) of 16S rRNA. The chain is Ribosomal RNA small subunit methyltransferase H from Acidiphilium cryptum (strain JF-5).